We begin with the raw amino-acid sequence, 175 residues long: PE-PGRS family protein PE_PGRS8 (175 aa).

The region spanning 1–93 is the PE domain; the sequence is MSFVIAAPEA…AGSYAAAEAA (93 aa).

This sequence belongs to the mycobacterial PE family. PGRS subfamily.

It is found in the secreted. It localises to the cell wall. Its subcellular location is the cell surface. The protein is PE-PGRS family protein PE_PGRS8 of Mycobacterium tuberculosis (strain ATCC 25618 / H37Rv).